Consider the following 275-residue polypeptide: Methyltransferase str2 (275 aa).

It belongs to the methyltransferase superfamily. LaeA methyltransferase family.

It participates in mycotoxin biosynthesis. Functionally, methyltransferase; part of the gene cluster that mediates the biosynthesis of strobilurin A, an antifungal polyketide that contains a key beta-methoxyacrylate toxophore that targets the complex III of the mitochondrial electron transport chain. Strobilurin biosynthesis begins with construction of benzoyl CoA by step-wise elimination of ammonia from phenylalanine by the phenylalanine ammonia-lyase str11, oxygenation by str8 and retro-Claisen reaction to form benzoic acid, which is activated to its CoA thiolester benzoyl CoA by the dedicated CoA ligase str10. Benzoyl CoA forms the starter unit for the highly reducing polyketide synthase stpks1 that produces the polyketide prestrobilutin A. The FAD-dependent oxygenase str9 then catalyzes the key oxidative rearrangement responsible for the creation of the beta-methoxyacrylate toxophore. Str9 performs epoxidation of the 2,3 olefin of prestrobilutin A, followed by Meinwald rearrangement to furnish the aldehyde intermediate. Rapid enolization of the aldehyde intermediate would give the beta-methoxyacrylate skeleton and methylations catalyzed by str2 and str3 complete the synthesis and lead to the production of strobilurin A. The short-chain dehydrogenase stl2 and the dehydrogenase str4 play a role in the shunt pathway leading to the production of bolineol. The cluster encodes no obvious halogenase gene that could be involved in production of strobilurin B, nor any obvious dimethylallyl-transferase that could be involved in the production of strobilurin G. It is possible that unknown proteins encoded in, or near, the cluster (such as str1 or stl1) may form new classes of halogenases or dimethylally-transferases, or that the responsible genes are located elsewhere on the genome. Similarly, proteins encoded by str5/str6 hydrolases appear to have no chemical role in the biosynthesis of strobilurin A. Finally, no obvious self-resistance gene is found within the cluster. This is Methyltransferase str2 from Strobilurus tenacellus.